The following is a 299-amino-acid chain: Protease HtpX homolog (299 aa).

2 helical membrane passes run 15 to 35 (ILLL…GYLF) and 39 to 59 (GLGG…SMIF). Zn(2+) is bound at residue histidine 143. Glutamate 144 is a catalytic residue. Zn(2+) is bound at residue histidine 147. The next 2 membrane-spanning stretches (helical) occupy residues 158–178 (IAVA…RMMW) and 198–218 (IIML…ATLV). Residue glutamate 227 coordinates Zn(2+).

It belongs to the peptidase M48B family. The cofactor is Zn(2+).

The protein localises to the cell membrane. In Streptococcus pneumoniae serotype 4 (strain ATCC BAA-334 / TIGR4), this protein is Protease HtpX homolog.